Reading from the N-terminus, the 325-residue chain is Golgi to ER traffic protein 4 homolog B (325 aa).

2 disordered regions span residues 1-22 and 306-325; these read MAAA…GGVQ and SGED…IELD. Acidic residues predominate over residues 307-317; that stretch reads GEDDDVEDGQE.

The protein belongs to the GET4 family. Component of the bag6/bat3 complex.

The protein localises to the cytoplasm. It localises to the cytosol. As part of a cytosolic protein quality control complex, the bag6/bat3 complex, maintains misfolded and hydrophobic patches-containing proteins in a soluble state and participates in their proper delivery to the endoplasmic reticulum or alternatively can promote their sorting to the proteasome where they undergo degradation. The bag6/bat3 complex is involved in the post-translational delivery of tail-anchored/type II transmembrane proteins to the endoplasmic reticulum membrane. Similarly, the bag6/bat3 complex also functions as a sorting platform for proteins of the secretory pathway that are mislocalized to the cytosol either delivering them to the proteasome for degradation or to the endoplasmic reticulum. The bag6/bat3 complex also plays a role in the endoplasmic reticulum-associated degradation (ERAD), a quality control mechanism that eliminates unwanted proteins of the endoplasmic reticulum through their retrotranslocation to the cytosol and their targeting to the proteasome. It maintains these retrotranslocated proteins in an unfolded yet soluble state condition in the cytosol to ensure their proper delivery to the proteasome. The polypeptide is Golgi to ER traffic protein 4 homolog B (get4-b) (Xenopus laevis (African clawed frog)).